Reading from the N-terminus, the 308-residue chain is Ribosomal RNA large subunit methyltransferase F (308 aa).

It belongs to the methyltransferase superfamily. METTL16/RlmF family.

The protein resides in the cytoplasm. It carries out the reaction adenosine(1618) in 23S rRNA + S-adenosyl-L-methionine = N(6)-methyladenosine(1618) in 23S rRNA + S-adenosyl-L-homocysteine + H(+). In terms of biological role, specifically methylates the adenine in position 1618 of 23S rRNA. This is Ribosomal RNA large subunit methyltransferase F from Salmonella agona (strain SL483).